The primary structure comprises 340 residues: Replication factor C subunit 3 (340 aa).

Ser2 bears the N-acetylserine mark. ATP contacts are provided by residues 16–19 (VEKY), Arg20, Tyr28, 53–61 (GPPGTGKTS), Asn148, and Arg206.

Belongs to the activator 1 small subunits family. In terms of assembly, replication factor C (RFC) is a heteropentamer of subunits RFC1, RFC2, RFC3, RFC4 and RFC5 and forms a complex with POL30/PCNA in the presence of ATP. Component of the RAD24-RFC complex which consists of RAD14, RFC2, RFC3, RFC4 and RFC5 and associates with the checkpoint clamp DDC1:MEC3:RAD17 complex. Component of the ELG1-RFC complex which consists of ELG1, RFC2, RFC3, RFC4 and RFC5. Component of the CTF18-RFC complex, which consists of CTF18, CTF8, DCC1, RFC2, RFC3, RFC4 and RFC5. RFC3 interacts with ECO1 and POL30/PCNA.

The protein resides in the nucleus. In terms of biological role, component of ATP-dependent clamp loader (RFC and RFC-like) complexes for DNA clamps, such as the POL30/PCNA homotrimer and the checkpoint clamp DDC1:MEC3:RAD17 complex. During a clamp loading circle, the RFC:clamp complex binds to DNA and the recognition of the double-stranded/single-stranded junction stimulates ATP hydrolysis by RFC. The complex presumably provides bipartite ATP sites in which one subunit supplies a catalytic site for hydrolysis of ATP bound to the neighboring subunit. Dissociation of RFC from the clamp leaves the clamp encircling DNA. Component of the replication factor C (RFC or activator 1) complex which loads POL30/PCNA and acts during elongation of primed DNA templates by DNA polymerase delta and epsilon. RFC has an essential but redundant activity in sister chromatid cohesion establishment. Component of the RFC-like complex CTF18-RFC which is required for efficient establishment of chromosome cohesion during S-phase and may load or unload POL30/PCNA. Component of the RFC-like RAD24-RFC complex which loads the checkpoint clamp DDC1:MEC3:RAD17 complex and is involved in DNA repair pathways. Component of the RFC-like ELG1-RFC complex which appears to have a role in DNA replication, replication fork re-start, recombination and repair. RFC3 supplies a catalytic site to the ATP site of RFC4. This is Replication factor C subunit 3 (RFC3) from Saccharomyces cerevisiae (strain ATCC 204508 / S288c) (Baker's yeast).